The primary structure comprises 252 residues: Small ribosomal subunit protein uS2 (252 aa).

Positions 231–252 (SVESTAQEQVEETAQEETAVEA) are disordered. The segment covering 239-252 (QVEETAQEETAVEA) has biased composition (acidic residues).

This sequence belongs to the universal ribosomal protein uS2 family.

This Acetivibrio thermocellus (strain ATCC 27405 / DSM 1237 / JCM 9322 / NBRC 103400 / NCIMB 10682 / NRRL B-4536 / VPI 7372) (Clostridium thermocellum) protein is Small ribosomal subunit protein uS2.